Consider the following 333-residue polypeptide: Diacylglycerol acyltransferase/mycolyltransferase Ag85C (333 aa).

The signal sequence occupies residues Met-1–Ala-44. Residue Leu-86–Arg-87 participates in substrate binding. The tract at residues Phe-102 to Val-112 is fibronectin-binding. 2 residues coordinate substrate: Ser-170 and Asn-198. Residue Ser-170 is the Nucleophile of the active site. Glu-274 is an active-site residue. Residues Leu-276–Ser-279 and His-306–Trp-308 each bind substrate. His-306 is a catalytic residue.

It belongs to the mycobacterial A85 antigen family. Homodimer.

The protein localises to the secreted. It catalyses the reaction an acyl-CoA + a 1,2-diacyl-sn-glycerol = a triacyl-sn-glycerol + CoA. The enzyme catalyses 2 alpha,alpha'-trehalose 6-mycolate = alpha,alpha'-trehalose 6,6'-bismycolate + alpha,alpha-trehalose. Its function is as follows. The antigen 85 proteins (FbpA, FbpB, FbpC) are responsible for the high affinity of mycobacteria to fibronectin, a large adhesive glycoprotein, which facilitates the attachment of M.tuberculosis to murine alveolar macrophages (AMs). They also help to maintain the integrity of the cell wall by catalyzing the transfer of mycolic acids to cell wall arabinogalactan and through the synthesis of alpha,alpha-trehalose dimycolate (TDM, cord factor). They catalyze the transfer of a mycoloyl residue from one molecule of alpha,alpha-trehalose monomycolate (TMM) to another TMM, leading to the formation of TDM. The protein is Diacylglycerol acyltransferase/mycolyltransferase Ag85C (fbpC) of Mycobacterium leprae (strain TN).